A 160-amino-acid chain; its full sequence is Cyclic pyranopterin monophosphate synthase (160 aa).

Residues Met77–His79 and Met114–Glu115 each bind substrate. The active site involves Asp129.

Belongs to the MoaC family. In terms of assembly, homohexamer; trimer of dimers.

It carries out the reaction (8S)-3',8-cyclo-7,8-dihydroguanosine 5'-triphosphate = cyclic pyranopterin phosphate + diphosphate. Its pathway is cofactor biosynthesis; molybdopterin biosynthesis. Functionally, catalyzes the conversion of (8S)-3',8-cyclo-7,8-dihydroguanosine 5'-triphosphate to cyclic pyranopterin monophosphate (cPMP). In Listeria monocytogenes serotype 4a (strain HCC23), this protein is Cyclic pyranopterin monophosphate synthase.